An 89-amino-acid chain; its full sequence is Small ribosomal subunit protein uS15 (89 aa).

This sequence belongs to the universal ribosomal protein uS15 family. As to quaternary structure, part of the 30S ribosomal subunit. Forms a bridge to the 50S subunit in the 70S ribosome, contacting the 23S rRNA.

In terms of biological role, one of the primary rRNA binding proteins, it binds directly to 16S rRNA where it helps nucleate assembly of the platform of the 30S subunit by binding and bridging several RNA helices of the 16S rRNA. Functionally, forms an intersubunit bridge (bridge B4) with the 23S rRNA of the 50S subunit in the ribosome. The polypeptide is Small ribosomal subunit protein uS15 (Shewanella amazonensis (strain ATCC BAA-1098 / SB2B)).